Here is a 384-residue protein sequence, read N- to C-terminus: L-aspartate decarboxylase (384 aa).

An N6-(pyridoxal phosphate)lysine modification is found at Lys231.

Belongs to the group II decarboxylase family. MfnA subfamily. In terms of assembly, homodimer. Can also form homohexamers. Requires pyridoxal 5'-phosphate as cofactor.

The catalysed reaction is L-aspartate + H(+) = beta-alanine + CO2. It participates in cofactor biosynthesis; coenzyme A biosynthesis. With respect to regulation, inhibited by hydroxylamine. In terms of biological role, catalyzes the decarboxylation of L-aspartate to produce beta-alanine. In vitro, can also catalyze the decarboxylation of L-glutamate to produce 4-aminobutanoate, but this activity does not seem necessary in vivo. Shows much higher activity with L-aspartate than with L-glutamate. Does not decarboxylate L-tyrosine. This is L-aspartate decarboxylase from Thermococcus kodakarensis (strain ATCC BAA-918 / JCM 12380 / KOD1) (Pyrococcus kodakaraensis (strain KOD1)).